The sequence spans 288 residues: THO complex subunit 4D (288 aa).

Residues 1 to 55 (MSGALNMTLDEIVKRGKTARSGGRGISRGRGRGRGGGGRGAGPARRGPLAVNARP) form a disordered region. At serine 2 the chain carries N-acetylserine. The 78-residue stretch at 93–170 (TRLHVTNLDQ…RPMRLEILGG (78 aa)) folds into the RRM domain. The disordered stretch occupies residues 201–288 (QGGGGRGRVR…SYHADAMNTS (88 aa)). The span at 232–260 (QGGGMRGGRGGFRARGRGNGGRGRGGGRG) shows a compositional bias: gly residues. Over residues 264 to 281 (KPVEKSAADLDKDLESYH) the composition is skewed to basic and acidic residues.

The protein belongs to the ALYREF family. Interacts with PARP1. Interacts with EIF4A3.

It localises to the nucleus. The protein resides in the nucleoplasm. The protein localises to the nucleolus. Its function is as follows. Export adapter involved in nuclear export of spliced and unspliced mRNA. Plays a role in disease resistance. Mediates multiple defense responses triggered by NEP1, including stomatal closure, hypersensitive cell death (HCD) and defense-related gene expression. This chain is THO complex subunit 4D, found in Arabidopsis thaliana (Mouse-ear cress).